We begin with the raw amino-acid sequence, 612 residues long: Membrane protein insertase YidC (612 aa).

Transmembrane regions (helical) follow at residues 4-24 (NTIIGFILIFWVLFGFAYLNH), 329-349 (LVPLGWSLFRAINKCLIIPIF), 358-378 (VNLGLAILILTLIIKIALFPL), 434-454 (ILLQMPFLIALFMFFPSAIGL), 484-504 (FLGNHISLFCLLMSLATILNT), 524-544 (LTMYFMPVVMFFFLNSYPAGL), and 546-566 (YYYLISTLITIMQTIIFRGLV).

It belongs to the OXA1/ALB3/YidC family. Type 1 subfamily. In terms of assembly, interacts with the Sec translocase complex via SecD. Specifically interacts with transmembrane segments of nascent integral membrane proteins during membrane integration.

It localises to the cell inner membrane. In terms of biological role, required for the insertion and/or proper folding and/or complex formation of integral membrane proteins into the membrane. Involved in integration of membrane proteins that insert both dependently and independently of the Sec translocase complex, as well as at least some lipoproteins. Aids folding of multispanning membrane proteins. In Azobacteroides pseudotrichonymphae genomovar. CFP2, this protein is Membrane protein insertase YidC.